The sequence spans 220 residues: MAEQQDARVYSDRRHEMVEQLKRYGITNSKVLEAFNAVERHLFFDAAYRDFAYDDGAFSIGYGQTISQPYTVAYMTSMLVERCPSGKVLEIGTGSGYQAAILEYMGYSVYTVERIEALFRRSSLILGALGLTVHQILGDGTLGWEEEAPYSGIIVTAGAPEPPSALLGQLAEEGVLIIPIGDSTGQRMTVFTRRGEMFQREEFHTFAFVPLIGREGWREE.

Residue Ser67 is part of the active site.

It belongs to the methyltransferase superfamily. L-isoaspartyl/D-aspartyl protein methyltransferase family.

The protein localises to the cytoplasm. The enzyme catalyses [protein]-L-isoaspartate + S-adenosyl-L-methionine = [protein]-L-isoaspartate alpha-methyl ester + S-adenosyl-L-homocysteine. Catalyzes the methyl esterification of L-isoaspartyl residues in peptides and proteins that result from spontaneous decomposition of normal L-aspartyl and L-asparaginyl residues. It plays a role in the repair and/or degradation of damaged proteins. The chain is Protein-L-isoaspartate O-methyltransferase from Chlorobium phaeobacteroides (strain BS1).